Here is a 203-residue protein sequence, read N- to C-terminus: Guanylate kinase (203 aa).

Positions 5-183 constitute a Guanylate kinase-like domain; sequence GVLYIISAPS…AVEELKSVVV (179 aa). Position 12–19 (12–19) interacts with ATP; the sequence is APSGAGKT.

The protein belongs to the guanylate kinase family.

The protein localises to the cytoplasm. It catalyses the reaction GMP + ATP = GDP + ADP. Essential for recycling GMP and indirectly, cGMP. This Geobacter metallireducens (strain ATCC 53774 / DSM 7210 / GS-15) protein is Guanylate kinase.